We begin with the raw amino-acid sequence, 802 residues long: Osmosensitive cation channel TMEM63C (802 aa).

Residues 1–35 (MSAFPDSMDQKFHNMTVNECFQSRSTVLQGQPFGG) lie on the Extracellular side of the membrane. The chain crosses the membrane as a helical span at residues 36-60 (IPTVLVLNIILWVFVVLLYSFLRKA). At 61–124 (AWDYGRLALL…RDRDLINKCG (64 aa)) the chain is on the cytoplasmic side. S75 and S78 each carry phosphoserine. The helical transmembrane segment at 125–157 (DDARIYITFQYHLIIFVLILCIPSLGIILPVNY) threads the bilayer. At 158–180 (IGTVLDWNSHFGRTTIVNVSTES) the chain is on the extracellular side. Residues 181-205 (KFLWLHSLFAFLYFLINLAFMGHHC) traverse the membrane as a helical segment. Topologically, residues 206–401 (LGFVPKKSLH…IIWKHLSIRR (196 aa)) are cytoplasmic. A helical membrane pass occupies residues 402 to 431 (FSWWTRFIAINTFLFFLFFFLTTPAIIINT). The Extracellular segment spans residues 432–446 (IDIYNVTRPIEKLQS). A helical membrane pass occupies residues 447 to 476 (PIVTQFFPSVLLWAFTVTMPLLVYLSAFLE). The Cytoplasmic segment spans residues 477–480 (AHWT). Residues 481–517 (RSSQNLIIVHKCYIFLVFMVVILPSMGLTSLHVFLRW) traverse the membrane as a helical segment. The Extracellular portion of the chain corresponds to 518–540 (LFDIYYLEHATIRFQCVFLPDNG). Residues 541–573 (AFFINYVITAALLGTGMELMRLGSLCTYCTRLF) traverse the membrane as a helical segment. The Cytoplasmic segment spans residues 574-593 (LSKSEPERVHIRKNQATDFQ). The chain crosses the membrane as a helical span at residues 594–612 (FGREYAWMLNVFSVVMAYS). Topologically, residues 613-615 (ITC) are extracellular. The helical transmembrane segment at 616-640 (PIIVPFGLLYLCMKHITDRYNMYYS) threads the bilayer. Residues 641 to 647 (YAPTKLN) are Cytoplasmic-facing. Residues 648 to 676 (AQIHMAAVYQAIFAPLLGLFWMLFFSILR) form a helical membrane-spanning segment. The Extracellular segment spans residues 677–681 (VGSLH). A helical transmembrane segment spans residues 682–702 (SITLFSMSSLIISVVIAFSGV). The Cytoplasmic segment spans residues 703-802 (FLGKLRIAQR…EGLEMEGQSH (100 aa)). A disordered region spans residues 753–785 (TPASSPARHTYGTINSQPEEGEEESGLRGFARE).

Belongs to the CSC1 (TC 1.A.17) family. In terms of assembly, monomer.

The protein resides in the endoplasmic reticulum membrane. It localises to the cell membrane. The catalysed reaction is Ca(2+)(in) = Ca(2+)(out). Functionally, acts as an osmosensitive cation channel preferentially activated upon hypotonic stress. In contrast to TMEM63B, does not show phospholipid scramblase activity. Enriched in mitochondria-ER contact sites where it may regulate the metabolite flux and organelles' morphologies in response to osmotic changes. In particular may regulate mitochondrial motility and function in motor neuron axons. Required for the functional integrity of the kidney glomerular filtration barrier. The sequence is that of Osmosensitive cation channel TMEM63C from Mus musculus (Mouse).